Here is a 642-residue protein sequence, read N- to C-terminus: Threonine--tRNA ligase (642 aa).

The region spanning 1 to 61 (MPVIRFYDGS…REDAFIEFVD (61 aa)) is the TGS domain. A catalytic region spans residues 243 to 534 (DHRKIGKFLQ…LIEECSGNLP (292 aa)). Cysteine 334, histidine 385, and histidine 511 together coordinate Zn(2+).

Belongs to the class-II aminoacyl-tRNA synthetase family. As to quaternary structure, homodimer. Zn(2+) is required as a cofactor.

The protein resides in the cytoplasm. The catalysed reaction is tRNA(Thr) + L-threonine + ATP = L-threonyl-tRNA(Thr) + AMP + diphosphate + H(+). Its function is as follows. Catalyzes the attachment of threonine to tRNA(Thr) in a two-step reaction: L-threonine is first activated by ATP to form Thr-AMP and then transferred to the acceptor end of tRNA(Thr). Also edits incorrectly charged L-seryl-tRNA(Thr). The protein is Threonine--tRNA ligase of Buchnera aphidicola subsp. Acyrthosiphon pisum (strain 5A).